A 386-amino-acid polypeptide reads, in one-letter code: MATTKSVLVLFFMILATTSSTCATLGEMVTVLSIDGGGIKGIIPATILEFLEGQLQEVDNNKDARLADYFDVIGGTSTGGLLTAMITTPNENNRPFAAAKDIVPFYFEHGPHIFNSSGSIFGPMYDGKYFLQVLQEKLGETRVHQALTEVAISSFDIKTNKPVIFTKSNLAKSPELDAKMYDICYSTAAAPTYFPPHYFVTHTSNGDKYEFNLVDGAVATVGDPALLSLSVATKLAQVDPKFASIKSLNYKQMLLLSLGTGTNSEFDKTYTAEEAAKWGPLRWILAIQQMTNAASSYMTDYYLSTVFQARHSQNNYLRVQENALTGTTTEMDDASEANMELLVQVGEKLLKKPVSKDSPETYEEALKRFAKLLSDRKKLRANKASY.

Positions Met-1–Ala-23 are cleaved as a signal peptide. In terms of domain architecture, PNPLA spans Leu-32–Leu-229. Positions Gly-36–Gly-41 match the GXGXXG motif. Positions Gly-75–Gly-79 match the GXSXG motif. Ser-77 serves as the catalytic Nucleophile. Asn-115 carries N-linked (GlcNAc...) asparagine glycosylation. Asp-215 acts as the Proton acceptor in catalysis. The DGA/G motif lies at Asp-215 to Ala-217. The stretch at Glu-321–Ala-384 forms a coiled coil.

It belongs to the patatin family. As to expression, tuber.

It localises to the vacuole. Its function is as follows. Probable lipolytic acyl hydrolase (LAH), an activity which is thought to be involved in the response of tubers to pathogens. This Solanum tuberosum (Potato) protein is Patatin-2-Kuras 3 (pat2-k3).